We begin with the raw amino-acid sequence, 132 residues long: MTMTDPLGDMLTRIRNGASRRKSSVSTPASKLRARVLDVLQAEGYIRGYSVVDFGNGKSELSIELKYYEGSSVIREIGRVSKPGRRVYVSVKSIPQVANGLGIIILSTPKGVMADHQAREQNVGGEVLCSVF.

This sequence belongs to the universal ribosomal protein uS8 family. In terms of assembly, part of the 30S ribosomal subunit. Contacts proteins S5 and S12.

Functionally, one of the primary rRNA binding proteins, it binds directly to 16S rRNA central domain where it helps coordinate assembly of the platform of the 30S subunit. This is Small ribosomal subunit protein uS8 from Rhizobium rhizogenes (strain K84 / ATCC BAA-868) (Agrobacterium radiobacter).